Consider the following 266-residue polypeptide: Tryptophan synthase alpha chain (266 aa).

Active-site proton acceptor residues include glutamate 51 and aspartate 62.

The protein belongs to the TrpA family. In terms of assembly, tetramer of two alpha and two beta chains.

The catalysed reaction is (1S,2R)-1-C-(indol-3-yl)glycerol 3-phosphate + L-serine = D-glyceraldehyde 3-phosphate + L-tryptophan + H2O. It functions in the pathway amino-acid biosynthesis; L-tryptophan biosynthesis; L-tryptophan from chorismate: step 5/5. In terms of biological role, the alpha subunit is responsible for the aldol cleavage of indoleglycerol phosphate to indole and glyceraldehyde 3-phosphate. The protein is Tryptophan synthase alpha chain of Prochlorococcus marinus (strain NATL1A).